The chain runs to 906 residues: Nuclear factor NF-kappa-B p100 subunit (906 aa).

The RHD domain maps to 34 to 223 (AVGPYLVIIE…DPIHDSKSPG (190 aa)). The Nuclear localization signal motif lies at 336 to 340 (RNRKK). The GRR stretch occupies residues 345 to 374 (FPQHFGGGSHMGGAGGAGGFGAGGGGNLSF). ANK repeat units lie at residues 472–501 (NGDTPLHLAIIHEQTAVIKQLIEVVVSIPS), 511–540 (LQQTPLHLAVITKQPQVVQLLLEAHANPTL), 544–573 (YGNSLLHLALQAADEEMLRMLLAHLASATP), 582–611 (QGLLPVHLAVKAKSPACLDLLVRKGADVNG), 616–646 (GGRTPLHLAVEMENLNMATHLVKKLGANVNS), and 650–679 (AGNTPLHLAAGLGSPTLTKLLLKAGADVQR). 2 disordered regions span residues 677–734 (VQRE…GPRQ) and 857–906 (EPLE…QQVH). Positions 684–695 (PVSPSSVRVPSS) are enriched in low complexity. The span at 697–708 (TDGDPEEQEQEQ) shows a compositional bias: acidic residues. Residues 771 to 857 (RNHLLSLDTD…GAVRMLRKPE (87 aa)) enclose the Death domain.

As to quaternary structure, component of the NF-kappa-B RelB-p52 complex. While translation occurs, the particular unfolded structure after the GRR repeat promotes the generation of p52 making it an acceptable substrate for the proteasome. This process is known as cotranslational processing. The processed form is active and the unprocessed form acts as an inhibitor (I kappa B-like), being able to form cytosolic complexes with NF-kappa B, trapping it in the cytoplasm. Complete folding of the region downstream of the GRR repeat precludes processing. Post-translationally, constitutive processing is tightly suppressed by its C-terminal processing inhibitory domain, named PID, which contains the death domain.

It is found in the nucleus. The protein localises to the cytoplasm. In terms of biological role, NF-kappa-B is a pleiotropic transcription factor present in almost all cell types and is the endpoint of a series of signal transduction events that are initiated by a vast array of stimuli related to many biological processes such as inflammation, immunity, differentiation, cell growth, tumorigenesis and apoptosis. NF-kappa-B is a homo- or heterodimeric complex formed by the Rel-like domain-containing proteins RELA/p65, RELB, NFKB1/p105, NFKB1/p50, REL and NFKB2/p52. The dimers bind at kappa-B sites in the DNA of their target genes and the individual dimers have distinct preferences for different kappa-B sites that they can bind with distinguishable affinity and specificity. Different dimer combinations act as transcriptional activators or repressors, respectively. NF-kappa-B is controlled by various mechanisms of post-translational modification and subcellular compartmentalization as well as by interactions with other cofactors or corepressors. NF-kappa-B complexes are held in the cytoplasm in an inactive state complexed with members of the NF-kappa-B inhibitor (I-kappa-B) family. In a conventional activation pathway, I-kappa-B is phosphorylated by I-kappa-B kinases (IKKs) in response to different activators, subsequently degraded thus liberating the active NF-kappa-B complex which translocates to the nucleus. In a non-canonical activation pathway, the MAP3K14-activated CHUK/IKKA homodimer phosphorylates NFKB2/p100 associated with RelB, inducing its proteolytic processing to NFKB2/p52 and the formation of NF-kappa-B RelB-p52 complexes. The NF-kappa-B heterodimeric RelB-p52 complex is a transcriptional activator. NFKB2 appears to have dual functions such as cytoplasmic retention of attached NF-kappa-B proteins by p100 and generation of p52 by a cotranslational processing. The proteasome-mediated process ensures the production of both p52 and p100 and preserves their independent function. p52 binds to the kappa-B consensus sequence 5'-GGRNNYYCC-3', located in the enhancer region of genes involved in immune response and acute phase reactions. In concert with RELB, may play a role in the regulation of the circadian clock. This chain is Nuclear factor NF-kappa-B p100 subunit (NFKB2), found in Gallus gallus (Chicken).